A 668-amino-acid polypeptide reads, in one-letter code: tRNA 5-methylaminomethyl-2-thiouridine biosynthesis bifunctional protein MnmC (668 aa).

Residues 1-245 form a tRNA (mnm(5)s(2)U34)-methyltransferase region; that stretch reads MKHYSIQPAN…KREMLCGVME (245 aa). The interval 270–668 is FAD-dependent cmnm(5)s(2)U34 oxidoreductase; sequence IGGGIACALL…LLKGKAVKAG (399 aa).

It in the N-terminal section; belongs to the methyltransferase superfamily. tRNA (mnm(5)s(2)U34)-methyltransferase family. The protein in the C-terminal section; belongs to the DAO family. FAD serves as cofactor.

The protein localises to the cytoplasm. The enzyme catalyses 5-aminomethyl-2-thiouridine(34) in tRNA + S-adenosyl-L-methionine = 5-methylaminomethyl-2-thiouridine(34) in tRNA + S-adenosyl-L-homocysteine + H(+). Functionally, catalyzes the last two steps in the biosynthesis of 5-methylaminomethyl-2-thiouridine (mnm(5)s(2)U) at the wobble position (U34) in tRNA. Catalyzes the FAD-dependent demodification of cmnm(5)s(2)U34 to nm(5)s(2)U34, followed by the transfer of a methyl group from S-adenosyl-L-methionine to nm(5)s(2)U34, to form mnm(5)s(2)U34. The chain is tRNA 5-methylaminomethyl-2-thiouridine biosynthesis bifunctional protein MnmC from Shigella boydii serotype 4 (strain Sb227).